A 428-amino-acid chain; its full sequence is Adenylosuccinate synthetase (428 aa).

Residues 11 to 17 (GDEGKGK) and 39 to 41 (GHT) each bind GTP. The active-site Proton acceptor is the D12. Positions 12 and 39 each coordinate Mg(2+). IMP contacts are provided by residues 12-15 (DEGK), 37-40 (NAGH), T130, R144, N226, T241, and R305. H40 (proton donor) is an active-site residue. Position 301–307 (301–307 (VTTGRKR)) interacts with substrate. GTP is bound by residues R307, 333-335 (KLD), and 415-417 (GTG).

It belongs to the adenylosuccinate synthetase family. Homodimer. The cofactor is Mg(2+).

Its subcellular location is the cytoplasm. The enzyme catalyses IMP + L-aspartate + GTP = N(6)-(1,2-dicarboxyethyl)-AMP + GDP + phosphate + 2 H(+). It participates in purine metabolism; AMP biosynthesis via de novo pathway; AMP from IMP: step 1/2. Functionally, plays an important role in the de novo pathway and in the salvage pathway of purine nucleotide biosynthesis. Catalyzes the first committed step in the biosynthesis of AMP from IMP. This chain is Adenylosuccinate synthetase, found in Candida tropicalis (strain ATCC MYA-3404 / T1) (Yeast).